The sequence spans 295 residues: MFRKFLFIPLLIVTSLVKAEIIEVDSLSKITQDFKVNYNKNYLPQDLLVVTVLDKFLFKPFGIPIGEYIDQRRYLELAPLFSQINKNSKIIYIAQLILTNDSYKKELQESDFPSFVNEISNSQIPIIAVNNGFTGNFNNIPKFEIWFADYLKKNFYIDFSKSFPNNNYIIFNNLDSFANTYPVFYKGILTSNNISVAQVILNFLIQINFIPKCFILISSNRELIRSMEFQLNNHSSNILFIGYHYNNKTISAHKDIVYYTKMINDLIPQINKLKRNNPPLKNNNAKSKNSYETHK.

Residues 1–19 (MFRKFLFIPLLIVTSLVKA) form the signal peptide. The segment at 274 to 295 (KRNNPPLKNNNAKSKNSYETHK) is disordered. Residues 276–288 (NNPPLKNNNAKSK) are compositionally biased toward low complexity.

This is an uncharacterized protein from Rickettsia typhi (strain ATCC VR-144 / Wilmington).